We begin with the raw amino-acid sequence, 405 residues long: Glucose-1-phosphate adenylyltransferase (405 aa).

Alpha-D-glucose 1-phosphate is bound by residues Tyr96, Gly161, 176 to 177 (EK), and Ser194.

The protein belongs to the bacterial/plant glucose-1-phosphate adenylyltransferase family. In terms of assembly, homotetramer.

It catalyses the reaction alpha-D-glucose 1-phosphate + ATP + H(+) = ADP-alpha-D-glucose + diphosphate. It participates in glycan biosynthesis; glycogen biosynthesis. Involved in the biosynthesis of ADP-glucose, a building block required for the elongation reactions to produce glycogen. Catalyzes the reaction between ATP and alpha-D-glucose 1-phosphate (G1P) to produce pyrophosphate and ADP-Glc. This chain is Glucose-1-phosphate adenylyltransferase, found in Aliivibrio fischeri (strain MJ11) (Vibrio fischeri).